The sequence spans 120 residues: MMICKVLVITVFCVLTVAFPSLDIDSINEELQDSIFDILNSTSDFQLASYEPSTSPPEDSTYQESNTDFMQTTYSKSIQISELSNGAETVSSSFLEEVTETSESTVEFPLAETTTFSSTS.

Positions 1–18 (MMICKVLVITVFCVLTVA) are cleaved as a signal peptide.

The protein localises to the secreted. This chain is Kidney androgen-regulated protein (Kap), found in Rattus norvegicus (Rat).